We begin with the raw amino-acid sequence, 207 residues long: Uracil phosphoribosyltransferase (207 aa).

Residues Arg-77, Arg-102, and 129–137 contribute to the 5-phospho-alpha-D-ribose 1-diphosphate site; that span reads DPMLATGGS. Uracil is bound by residues Ile-192 and 197–199; that span reads GDA. Asp-198 contacts 5-phospho-alpha-D-ribose 1-diphosphate.

It belongs to the UPRTase family. Mg(2+) is required as a cofactor.

It carries out the reaction UMP + diphosphate = 5-phospho-alpha-D-ribose 1-diphosphate + uracil. Its pathway is pyrimidine metabolism; UMP biosynthesis via salvage pathway; UMP from uracil: step 1/1. With respect to regulation, allosterically activated by GTP. Functionally, catalyzes the conversion of uracil and 5-phospho-alpha-D-ribose 1-diphosphate (PRPP) to UMP and diphosphate. The chain is Uracil phosphoribosyltransferase from Ureaplasma urealyticum serovar 10 (strain ATCC 33699 / Western).